Consider the following 526-residue polypeptide: Probable feruloyl esterase B-2 (526 aa).

The signal sequence occupies residues 1-18 (MTKLSLLPLLALASAVLA). Disulfide bonds link Cys27/Cys74 and Cys62/Cys113. N-linked (GlcNAc...) asparagine glycans are attached at residues Asn52, Asn97, and Asn137. Disulfide bonds link Cys186–Cys441, Cys255–Cys272, Cys281–Cys291, and Cys503–Cys525. Ser187 (acyl-ester intermediate) is an active-site residue. A glycan (N-linked (GlcNAc...) asparagine) is linked at Asn233. 5 residues coordinate Ca(2+): Asp256, Asp259, Ala261, Asp263, and Ile265. Asn311 carries N-linked (GlcNAc...) asparagine glycosylation. Active-site charge relay system residues include Asp400 and His440. A glycan (N-linked (GlcNAc...) asparagine) is linked at Asn516.

This sequence belongs to the tannase family.

It localises to the secreted. It catalyses the reaction feruloyl-polysaccharide + H2O = ferulate + polysaccharide.. Its function is as follows. Involved in degradation of plant cell walls. Hydrolyzes the feruloyl-arabinose ester bond in arabinoxylans as well as the feruloyl-galactose and feruloyl-arabinose ester bonds in pectin. In Neosartorya fischeri (strain ATCC 1020 / DSM 3700 / CBS 544.65 / FGSC A1164 / JCM 1740 / NRRL 181 / WB 181) (Aspergillus fischerianus), this protein is Probable feruloyl esterase B-2 (faeB-2).